The chain runs to 439 residues: uncharacterized protein (439 aa).

An N-terminal signal peptide occupies residues 1-22; it reads MWVALKRFGFLSGLLALTVLSA. Residue C23 is the site of N-palmitoyl cysteine attachment. C23 is lipidated: S-diacylglycerol cysteine.

It belongs to the MG067/MG068/MG395 family.

It is found in the cell membrane. This is an uncharacterized protein from Mycoplasma pneumoniae (strain ATCC 29342 / M129 / Subtype 1) (Mycoplasmoides pneumoniae).